We begin with the raw amino-acid sequence, 149 residues long: MHCPFCSENDTKVIDSRLVADGHQVRRRRQCLACSERFTTFESAELVMPKVIKSNGNREPFNEDKMVGGVQRALEKRPVSADAIELAISTIKSQLRATGEREVPSEMIGNLVMGQLKELDKVAYIRFASVYRSFEDIREFGEEIAKLED.

A zinc finger lies at 3 to 34 (CPFCSENDTKVIDSRLVADGHQVRRRRQCLAC). The region spanning 49-139 (PKVIKSNGNR…VYRSFEDIRE (91 aa)) is the ATP-cone domain.

The protein belongs to the NrdR family. The cofactor is Zn(2+).

Functionally, negatively regulates transcription of bacterial ribonucleotide reductase nrd genes and operons by binding to NrdR-boxes. This Vibrio atlanticus (strain LGP32) (Vibrio splendidus (strain Mel32)) protein is Transcriptional repressor NrdR.